An 83-amino-acid chain; its full sequence is Mitochondrial import inner membrane translocase subunit Tim8 B (83 aa).

Position 2 is an N-acetylalanine (alanine 2). The short motif at 36–59 (CWDKCVEKPGNRLDSRTENCLSSC) is the Twin CX3C motif element. Disulfide bonds link cysteine 36–cysteine 59 and cysteine 40–cysteine 55.

Belongs to the small Tim family. In terms of assembly, heterohexamer; possibly composed of 3 copies of TIMM8B and 3 copies of TIMM13, named soluble 70 kDa complex. Associates with the TIM22 complex, whose core is composed of TIMM22.

The protein resides in the mitochondrion inner membrane. Its function is as follows. Probable mitochondrial intermembrane chaperone that participates in the import and insertion of some multi-pass transmembrane proteins into the mitochondrial inner membrane. Also required for the transfer of beta-barrel precursors from the TOM complex to the sorting and assembly machinery (SAM complex) of the outer membrane. Acts as a chaperone-like protein that protects the hydrophobic precursors from aggregation and guide them through the mitochondrial intermembrane space. The polypeptide is Mitochondrial import inner membrane translocase subunit Tim8 B (TIMM8B) (Bos taurus (Bovine)).